Consider the following 986-residue polypeptide: Translation initiation factor IF-2 (986 aa).

The segment covering 49-59 (EFAKDNAKGDS) has biased composition (basic and acidic residues). A disordered region spans residues 49–370 (EFAKDNAKGD…KNRLAKRHEY (322 aa)). A compositionally biased stretch (low complexity) spans 60-112 (KPASSAQKPAAKPVQQRRPAAPSAPASTSSSAPTPAAPARQASPASAHQQAPT). Basic and acidic residues predominate over residues 135–168 (GQHDNRENGRDNREGRENGRQSRPNDRRNNDRRN). Over residues 170–182 (QGRPNNGQPGQHQ) the composition is skewed to low complexity. Gly residues-rich tracts occupy residues 254-286 (GRGGRPGRPGQGQGQGRGFRGGRPGQGGQGGPR) and 296-353 (GQGG…GRQG). A compositionally biased stretch (basic residues) spans 357–366 (SKARKNRLAK). A tr-type G domain is found at 479–651 (PRPPVVTVMG…VLLTADAELD (173 aa)). A G1 region spans residues 488–495 (GHVDHGKT). 488–495 (GHVDHGKT) contributes to the GTP binding site. Positions 513–517 (GITQR) are G2. The G3 stretch occupies residues 538–541 (DTPG). GTP is bound by residues 538-542 (DTPGH) and 592-595 (NKID). The segment at 592 to 595 (NKID) is G4. Residues 628–630 (SAK) are G5.

It belongs to the TRAFAC class translation factor GTPase superfamily. Classic translation factor GTPase family. IF-2 subfamily.

It localises to the cytoplasm. Its function is as follows. One of the essential components for the initiation of protein synthesis. Protects formylmethionyl-tRNA from spontaneous hydrolysis and promotes its binding to the 30S ribosomal subunits. Also involved in the hydrolysis of GTP during the formation of the 70S ribosomal complex. This is Translation initiation factor IF-2 from Bifidobacterium longum subsp. infantis (strain ATCC 15697 / DSM 20088 / JCM 1222 / NCTC 11817 / S12).